Consider the following 241-residue polypeptide: MIRVEFLKVFRFLTVLPIGEHPKSPREIGEQAWLGLPAVGLVSGLLAGVVAWAFAGTPVRGCLVVLTLLVLEGAQHFDGLVDVGDALMAGVISEEGATKAMRDPRVGVGGLAIGSMALLLAVASFGWIPFEVLVPIEVFSRFTVLPMAAVGEPAPASYSGRVFTEYVDADQVLLGGILSTVVSLPFSPVATLTCAVCSAVVAWTCLEAARRTIRGVNGDFLGASIWVSRVLSAVCLSSLPW.

The next 4 helical transmembrane spans lie at 34–54 (LGLP…AWAF), 108–128 (VGGL…FGWI), 184–206 (LPFS…WTCL), and 220–240 (FLGA…SSLP).

This sequence belongs to the CobS family. Requires Mg(2+) as cofactor.

It is found in the cell membrane. The enzyme catalyses alpha-ribazole + adenosylcob(III)inamide-GDP = adenosylcob(III)alamin + GMP + H(+). It catalyses the reaction alpha-ribazole 5'-phosphate + adenosylcob(III)inamide-GDP = adenosylcob(III)alamin 5'-phosphate + GMP + H(+). It participates in cofactor biosynthesis; adenosylcobalamin biosynthesis; adenosylcobalamin from cob(II)yrinate a,c-diamide: step 7/7. Functionally, joins adenosylcobinamide-GDP and alpha-ribazole to generate adenosylcobalamin (Ado-cobalamin). Also synthesizes adenosylcobalamin 5'-phosphate from adenosylcobinamide-GDP and alpha-ribazole 5'-phosphate. This Methanopyrus kandleri (strain AV19 / DSM 6324 / JCM 9639 / NBRC 100938) protein is Adenosylcobinamide-GDP ribazoletransferase.